The primary structure comprises 955 residues: Bifunctional glutamine synthetase adenylyltransferase/adenylyl-removing enzyme (955 aa).

The interval 1–458 is adenylyl removase; the sequence is MTAQAPLSVA…QFEQTFSDKQ (458 aa). Residues 464–955 form an adenylyl transferase region; sequence CAAIWHADLL…GSIDAASPTP (492 aa).

This sequence belongs to the GlnE family. The cofactor is Mg(2+).

The enzyme catalyses [glutamine synthetase]-O(4)-(5'-adenylyl)-L-tyrosine + phosphate = [glutamine synthetase]-L-tyrosine + ADP. The catalysed reaction is [glutamine synthetase]-L-tyrosine + ATP = [glutamine synthetase]-O(4)-(5'-adenylyl)-L-tyrosine + diphosphate. Functionally, involved in the regulation of glutamine synthetase GlnA, a key enzyme in the process to assimilate ammonia. When cellular nitrogen levels are high, the C-terminal adenylyl transferase (AT) inactivates GlnA by covalent transfer of an adenylyl group from ATP to specific tyrosine residue of GlnA, thus reducing its activity. Conversely, when nitrogen levels are low, the N-terminal adenylyl removase (AR) activates GlnA by removing the adenylyl group by phosphorolysis, increasing its activity. The regulatory region of GlnE binds the signal transduction protein PII (GlnB) which indicates the nitrogen status of the cell. The chain is Bifunctional glutamine synthetase adenylyltransferase/adenylyl-removing enzyme from Ralstonia nicotianae (strain ATCC BAA-1114 / GMI1000) (Ralstonia solanacearum).